A 548-amino-acid chain; its full sequence is Probable delta-1-pyrroline-5-carboxylate dehydrogenase (548 aa).

Catalysis depends on glutamate 298, which acts as the Proton acceptor. The active-site Nucleophile is the cysteine 332. Residues serine 391, serine 394, and serine 396 each carry the phosphoserine modification.

The protein belongs to the aldehyde dehydrogenase family.

The catalysed reaction is L-glutamate 5-semialdehyde + NAD(+) + H2O = L-glutamate + NADH + 2 H(+). It functions in the pathway amino-acid degradation; L-proline degradation into L-glutamate; L-glutamate from L-proline: step 2/2. The protein is Probable delta-1-pyrroline-5-carboxylate dehydrogenase of Schizosaccharomyces pombe (strain 972 / ATCC 24843) (Fission yeast).